The chain runs to 275 residues: Diaminopimelate epimerase (275 aa).

Residues N20 and N63 each coordinate substrate. Catalysis depends on C72, which acts as the Proton donor. Substrate-binding positions include 73–74 (GN), N179, and 197–198 (ER). C207 (proton acceptor) is an active-site residue. A substrate-binding site is contributed by 208 to 209 (GT).

This sequence belongs to the diaminopimelate epimerase family. In terms of assembly, homodimer.

It is found in the cytoplasm. The catalysed reaction is (2S,6S)-2,6-diaminopimelate = meso-2,6-diaminopimelate. The protein operates within amino-acid biosynthesis; L-lysine biosynthesis via DAP pathway; DL-2,6-diaminopimelate from LL-2,6-diaminopimelate: step 1/1. In terms of biological role, catalyzes the stereoinversion of LL-2,6-diaminopimelate (L,L-DAP) to meso-diaminopimelate (meso-DAP), a precursor of L-lysine and an essential component of the bacterial peptidoglycan. The chain is Diaminopimelate epimerase from Chlamydia trachomatis serovar L2 (strain ATCC VR-902B / DSM 19102 / 434/Bu).